Reading from the N-terminus, the 540-residue chain is NADH-quinone oxidoreductase subunit N 1 (540 aa).

The next 13 helical transmembrane spans lie at Ile11–Thr31, Ala52–Val72, Phe109–Met129, Ala142–Leu162, Phe195–Phe215, Leu250–Phe270, Pro284–Thr306, Trp324–Leu344, Leu352–Ala372, Leu386–Val406, Leu431–Ala451, Ala464–Leu486, and Ala508–Trp528.

This sequence belongs to the complex I subunit 2 family. In terms of assembly, NDH-1 is composed of 14 different subunits. Subunits NuoA, H, J, K, L, M, N constitute the membrane sector of the complex.

Its subcellular location is the cell membrane. It catalyses the reaction a quinone + NADH + 5 H(+)(in) = a quinol + NAD(+) + 4 H(+)(out). Its function is as follows. NDH-1 shuttles electrons from NADH, via FMN and iron-sulfur (Fe-S) centers, to quinones in the respiratory chain. The immediate electron acceptor for the enzyme in this species is believed to be ubiquinone. Couples the redox reaction to proton translocation (for every two electrons transferred, four hydrogen ions are translocated across the cytoplasmic membrane), and thus conserves the redox energy in a proton gradient. The chain is NADH-quinone oxidoreductase subunit N 1 from Roseiflexus castenholzii (strain DSM 13941 / HLO8).